The following is a 116-amino-acid chain: NADH-ubiquinone oxidoreductase chain 3 (116 aa).

The next 3 helical transmembrane spans lie at 8–28 (VAATALISLILAFVAFWLPSL), 56–76 (FFLVAILFLLFDLEIALLLPL), and 87–107 (ISLLWATSIIILLTLGLIYEW).

This sequence belongs to the complex I subunit 3 family.

The protein resides in the mitochondrion membrane. The catalysed reaction is a ubiquinone + NADH + 5 H(+)(in) = a ubiquinol + NAD(+) + 4 H(+)(out). Its function is as follows. Core subunit of the mitochondrial membrane respiratory chain NADH dehydrogenase (Complex I) that is believed to belong to the minimal assembly required for catalysis. Complex I functions in the transfer of electrons from NADH to the respiratory chain. The immediate electron acceptor for the enzyme is believed to be ubiquinone. The protein is NADH-ubiquinone oxidoreductase chain 3 (MT-ND3) of Squalus acanthias (Spiny dogfish).